Reading from the N-terminus, the 203-residue chain is Small ribosomal subunit protein uS4 (203 aa).

The region spanning 93–158 (LRLDNVVYRL…QQLVTRFLDL (66 aa)) is the S4 RNA-binding domain.

Belongs to the universal ribosomal protein uS4 family. In terms of assembly, part of the 30S ribosomal subunit. Contacts protein S5. The interaction surface between S4 and S5 is involved in control of translational fidelity.

Functionally, one of the primary rRNA binding proteins, it binds directly to 16S rRNA where it nucleates assembly of the body of the 30S subunit. With S5 and S12 plays an important role in translational accuracy. The polypeptide is Small ribosomal subunit protein uS4 (Akkermansia muciniphila (strain ATCC BAA-835 / DSM 22959 / JCM 33894 / BCRC 81048 / CCUG 64013 / CIP 107961 / Muc)).